The following is a 752-amino-acid chain: Catalase-peroxidase (752 aa).

Residues 1–21 (MSNESKCPFHQTAGGGTTNRD) form a disordered region. A cross-link (tryptophyl-tyrosyl-methioninium (Trp-Tyr) (with M-271)) is located at residues 91 to 245 (WHSAGTYRIG…LAAVQMGLIY (155 aa)). His92 functions as the Proton acceptor in the catalytic mechanism. Residues 204 to 228 (QAPGQGDLVAEPAKHGEEQNRDLSA) are disordered. Residues 215–228 (PAKHGEEQNRDLSA) are compositionally biased toward basic and acidic residues. Positions 245-271 (YVNPEGPEGNPDPVASGKDIRETFGRM) form a cross-link, tryptophyl-tyrosyl-methioninium (Tyr-Met) (with W-91). Position 286 (His286) interacts with heme. A disordered region spans residues 366–391 (AHQWQPKEGKGAGTVPDAHDPSKRHA).

The protein belongs to the peroxidase family. Peroxidase/catalase subfamily. As to quaternary structure, homodimer or homotetramer. Requires heme b as cofactor. In terms of processing, formation of the three residue Trp-Tyr-Met cross-link is important for the catalase, but not the peroxidase activity of the enzyme.

It catalyses the reaction H2O2 + AH2 = A + 2 H2O. It carries out the reaction 2 H2O2 = O2 + 2 H2O. Its function is as follows. Bifunctional enzyme with both catalase and broad-spectrum peroxidase activity. The sequence is that of Catalase-peroxidase from Pseudomonas putida (strain W619).